We begin with the raw amino-acid sequence, 120 residues long: NAD(P)H-quinone oxidoreductase subunit 3 (120 aa).

The next 3 membrane-spanning stretches (helical) occupy residues 10–30, 64–84, and 89–109; these read FLGFLIIAAAVPILALVTNLI, MFALVFVIFDVETVFLYPWAV, and LGLLAFIEALIFITILVIALA.

The protein belongs to the complex I subunit 3 family. NDH-1 can be composed of about 15 different subunits; different subcomplexes with different compositions have been identified which probably have different functions.

Its subcellular location is the cellular thylakoid membrane. The enzyme catalyses a plastoquinone + NADH + (n+1) H(+)(in) = a plastoquinol + NAD(+) + n H(+)(out). It carries out the reaction a plastoquinone + NADPH + (n+1) H(+)(in) = a plastoquinol + NADP(+) + n H(+)(out). Its function is as follows. NDH-1 shuttles electrons from an unknown electron donor, via FMN and iron-sulfur (Fe-S) centers, to quinones in the respiratory and/or the photosynthetic chain. The immediate electron acceptor for the enzyme in this species is believed to be plastoquinone. Couples the redox reaction to proton translocation, and thus conserves the redox energy in a proton gradient. Cyanobacterial NDH-1 also plays a role in inorganic carbon-concentration. In Prochlorococcus marinus subsp. pastoris (strain CCMP1986 / NIES-2087 / MED4), this protein is NAD(P)H-quinone oxidoreductase subunit 3.